The primary structure comprises 841 residues: Protein translocase subunit SecA (841 aa).

Residues glutamine 85, 103–107 (GEGKT), and aspartate 492 contribute to the ATP site. The tract at residues 788-841 (EVVQGQTTAHQPQEGDEEKTVKKKPVRKVVDIGRNSPCHCGSGKKYKNCHGKTE) is disordered. Positions 825, 827, 836, and 837 each coordinate Zn(2+). Over residues 829-841 (SGKKYKNCHGKTE) the composition is skewed to basic residues.

The protein belongs to the SecA family. As to quaternary structure, monomer and homodimer. Part of the essential Sec protein translocation apparatus which comprises SecA, SecYEG and auxiliary proteins SecDF. Other proteins may also be involved. It depends on Zn(2+) as a cofactor.

The protein localises to the cell membrane. It is found in the cytoplasm. The enzyme catalyses ATP + H2O + cellular proteinSide 1 = ADP + phosphate + cellular proteinSide 2.. Functionally, part of the Sec protein translocase complex. Interacts with the SecYEG preprotein conducting channel. Has a central role in coupling the hydrolysis of ATP to the transfer of proteins into and across the cell membrane, serving as an ATP-driven molecular motor driving the stepwise translocation of polypeptide chains across the membrane. In Bacillus pumilus (strain SAFR-032), this protein is Protein translocase subunit SecA.